A 680-amino-acid chain; its full sequence is Dihydroxyacetone phosphate acyltransferase (680 aa).

Phosphoserine occurs at positions 12 and 17. The HXXXXD motif motif lies at 162 to 167 (HRSYID). Residue K643 is modified to N6-acetyllysine. The short motif at 678 to 680 (AKL) is the Microbody targeting signal element.

The protein belongs to the GPAT/DAPAT family. In terms of assembly, part of a heterotrimeric complex composed of GNPAT, AGPS and a modified form of GNPAT.

The protein localises to the peroxisome membrane. The catalysed reaction is dihydroxyacetone phosphate + an acyl-CoA = a 1-acylglycerone 3-phosphate + CoA. The enzyme catalyses dihydroxyacetone phosphate + hexadecanoyl-CoA = 1-hexadecanoylglycerone 3-phosphate + CoA. Its pathway is membrane lipid metabolism; glycerophospholipid metabolism. Its function is as follows. Dihydroxyacetonephosphate acyltransferase catalyzing the first step in the biosynthesis of plasmalogens, a subset of phospholipids that differ from other glycerolipids by having an alkyl chain attached through a vinyl ether linkage at the sn-1 position of the glycerol backbone, and which unique physical properties have an impact on various aspects of cell signaling and membrane biology. The polypeptide is Dihydroxyacetone phosphate acyltransferase (Bos taurus (Bovine)).